The primary structure comprises 617 residues: Proline--tRNA ligase (617 aa).

The protein belongs to the class-II aminoacyl-tRNA synthetase family. ProS type 1 subfamily. In terms of assembly, homodimer.

The protein localises to the cytoplasm. It carries out the reaction tRNA(Pro) + L-proline + ATP = L-prolyl-tRNA(Pro) + AMP + diphosphate. Functionally, catalyzes the attachment of proline to tRNA(Pro) in a two-step reaction: proline is first activated by ATP to form Pro-AMP and then transferred to the acceptor end of tRNA(Pro). As ProRS can inadvertently accommodate and process non-cognate amino acids such as alanine and cysteine, to avoid such errors it has two additional distinct editing activities against alanine. One activity is designated as 'pretransfer' editing and involves the tRNA(Pro)-independent hydrolysis of activated Ala-AMP. The other activity is designated 'posttransfer' editing and involves deacylation of mischarged Ala-tRNA(Pro). The misacylated Cys-tRNA(Pro) is not edited by ProRS. In Streptococcus agalactiae serotype Ia (strain ATCC 27591 / A909 / CDC SS700), this protein is Proline--tRNA ligase.